Reading from the N-terminus, the 270-residue chain is 4-hydroxy-tetrahydrodipicolinate reductase (270 aa).

NAD(+) is bound by residues 11-16 (GAGGRM) and glutamate 37. Arginine 38 provides a ligand contact to NADP(+). NAD(+) contacts are provided by residues 101–103 (GTT) and 125–128 (APNM). The active-site Proton donor/acceptor is the histidine 158. Histidine 159 is a (S)-2,3,4,5-tetrahydrodipicolinate binding site. Lysine 162 functions as the Proton donor in the catalytic mechanism. 168–169 (GT) contacts (S)-2,3,4,5-tetrahydrodipicolinate.

This sequence belongs to the DapB family.

The protein localises to the cytoplasm. It catalyses the reaction (S)-2,3,4,5-tetrahydrodipicolinate + NAD(+) + H2O = (2S,4S)-4-hydroxy-2,3,4,5-tetrahydrodipicolinate + NADH + H(+). It carries out the reaction (S)-2,3,4,5-tetrahydrodipicolinate + NADP(+) + H2O = (2S,4S)-4-hydroxy-2,3,4,5-tetrahydrodipicolinate + NADPH + H(+). It participates in amino-acid biosynthesis; L-lysine biosynthesis via DAP pathway; (S)-tetrahydrodipicolinate from L-aspartate: step 4/4. In terms of biological role, catalyzes the conversion of 4-hydroxy-tetrahydrodipicolinate (HTPA) to tetrahydrodipicolinate. In Shewanella sp. (strain W3-18-1), this protein is 4-hydroxy-tetrahydrodipicolinate reductase.